Consider the following 423-residue polypeptide: Serine hydroxymethyltransferase (423 aa).

(6S)-5,6,7,8-tetrahydrofolate is bound by residues Leu120 and 124-126 (GHL). Lys229 carries the post-translational modification N6-(pyridoxal phosphate)lysine. Residue 353-355 (SPF) coordinates (6S)-5,6,7,8-tetrahydrofolate.

Belongs to the SHMT family. In terms of assembly, homodimer. It depends on pyridoxal 5'-phosphate as a cofactor.

The protein localises to the cytoplasm. It catalyses the reaction (6R)-5,10-methylene-5,6,7,8-tetrahydrofolate + glycine + H2O = (6S)-5,6,7,8-tetrahydrofolate + L-serine. It functions in the pathway one-carbon metabolism; tetrahydrofolate interconversion. It participates in amino-acid biosynthesis; glycine biosynthesis; glycine from L-serine: step 1/1. In terms of biological role, catalyzes the reversible interconversion of serine and glycine with tetrahydrofolate (THF) serving as the one-carbon carrier. This reaction serves as the major source of one-carbon groups required for the biosynthesis of purines, thymidylate, methionine, and other important biomolecules. Also exhibits THF-independent aldolase activity toward beta-hydroxyamino acids, producing glycine and aldehydes, via a retro-aldol mechanism. This is Serine hydroxymethyltransferase from Prochlorococcus marinus (strain MIT 9515).